We begin with the raw amino-acid sequence, 429 residues long: Small ribosomal subunit protein bS1 (429 aa).

S1 motif domains follow at residues 55–128 (GDVV…LSKK), 144–211 (GDTV…SRKA), 231–299 (GEVV…LSIK), and 316–385 (GSVL…LSMK). Residues 382 to 399 (LSMKALEEKPEREDRRGN) are compositionally biased toward basic and acidic residues. Positions 382 to 412 (LSMKALEEKPEREDRRGNDGSASRADIAAYK) are disordered.

It belongs to the bacterial ribosomal protein bS1 family.

Binds mRNA; thus facilitating recognition of the initiation point. It is needed to translate mRNA with a short Shine-Dalgarno (SD) purine-rich sequence. The polypeptide is Small ribosomal subunit protein bS1 (rps1) (Leuconostoc lactis).